Here is a 1067-residue protein sequence, read N- to C-terminus: [F-actin]-monooxygenase MICAL1 (1067 aa).

Positions 1–489 (MASPTSTNPA…RDLYDVLAKE (489 aa)) are monooxygenase domain. Residues Cys95, 114–116 (EKR), 121–123 (RHN), Phe181, Tyr293, and Asp393 contribute to the FAD site. Thr475 is modified (phosphothreonine). In terms of domain architecture, Calponin-homology (CH) spans 508-612 (AGTQEELLRW…YLSHFHSAFK (105 aa)). Ser617 is subject to Phosphoserine. The interval 645-688 (SRAKENAEDAGGKKLRLEMEAETPSTEVPPDPEPGVPLTPPSQH) is disordered. The segment covering 646-663 (RAKENAEDAGGKKLRLEM) has biased composition (basic and acidic residues). A coiled-coil region spans residues 646 to 666 (RAKENAEDAGGKKLRLEMEAE). Residues 671-684 (EVPPDPEPGVPLTP) are compositionally biased toward pro residues. The LIM zinc-binding domain occupies 695–757 (DLCALCGEHL…LQHLPQTDHK (63 aa)). The Zn(2+) site is built by Cys697, Cys700, His718, Cys721, Cys724, Cys727, Cys747, and His750. Residues 755-766 (DHKAEGSDRGPE) are compositionally biased toward basic and acidic residues. Disordered stretches follow at residues 755 to 838 (DHKA…RSCS) and 867 to 886 (KEEK…VPLD). The segment covering 773-789 (PSENSMPPGLSTPTASQ) has biased composition (polar residues). Phosphoserine is present on residues Ser872, Ser875, and Ser876. Acidic residues predominate over residues 876 to 886 (SEEEEEDVPLD). An important for interaction with RAB8A region spans residues 901–1067 (GTMNNYPTWR…ELALGTGAQG (167 aa)). Residues 918–1067 (KEEEMKRFCK…ELALGTGAQG (150 aa)) enclose the bMERB domain. Coiled-coil stretches lie at residues 919–962 (EEEM…QSSS) and 999–1027 (NLEE…AADR). Position 1057 is a phosphoserine (Ser1057).

The protein belongs to the Mical family. In terms of assembly, interacts with STK38 and STK38L. Interacts with RAB1B, RAB8A, RAB10, RAB13, RAB15 and RAB35 (in their GTP-bound forms); binding to RAB1B is of low affinity compared to other Rab proteins; at least in case of RAB8A and RAB10 can bind 2 molecules of the Rab proteins simultaneously; ternary complex formation of RAB8A, RAB13 and MICAL1 is possible. Associates with the SH3 domain of NEDD9. Interacts with VIM and PLXNA3. Interacts with GRAF1/ARHGAP26, GRAF2/ARHGAP10, RAB8A, RAB8B and RAB10; may bind simultaneously to GRAFs and Rabs and connects GRAFs to Rabs. Does not interact with RAB1 and RAB11A. The cofactor is FAD. In terms of tissue distribution, expressed in the thymus, lung, spleen, kidney, testis and hematopoietic cells.

Its subcellular location is the cytoplasm. The protein resides in the cytoskeleton. It localises to the endosome membrane. It is found in the midbody. The catalysed reaction is L-methionyl-[F-actin] + NADPH + O2 + H(+) = L-methionyl-(R)-S-oxide-[F-actin] + NADP(+) + H2O. It catalyses the reaction NADPH + O2 + H(+) = H2O2 + NADP(+). Its function is as follows. Monooxygenase that promotes depolymerization of F-actin by mediating oxidation of specific methionine residues on actin to form methionine-sulfoxide, resulting in actin filament disassembly and preventing repolymerization. In the absence of actin, it also functions as a NADPH oxidase producing H(2)O(2). Acts as a cytoskeletal regulator that connects NEDD9 to intermediate filaments. Also acts as a negative regulator of apoptosis via its interaction with STK38 and STK38L; acts by antagonizing STK38 and STK38L activation by MST1/STK4. Involved in regulation of lamina-specific connectivity in the nervous system such as the development of lamina-restricted hippocampal connections. Through redox regulation of the actin cytoskeleton controls the intracellular distribution of secretory vesicles containing L1/neurofascin/NgCAM family proteins in neurons, thereby regulating their cell surface levels. May act as Rab effector protein and play a role in vesicle trafficking. Promotes endosomal tubule extension by associating with RAB8 (RAB8A or RAB8B), RAB10 and GRAF (GRAF1/ARHGAP26 or GRAF2/ARHGAP10) on the endosomal membrane which may connect GRAFs to Rabs, thereby participating in neosynthesized Rab8-Rab10-Rab11-dependent protein export. The sequence is that of [F-actin]-monooxygenase MICAL1 (MICAL1) from Homo sapiens (Human).